Here is a 2637-residue protein sequence, read N- to C-terminus: Nonribisomal peptide synthetase valB (2637 aa).

Positions 1–376 (MADGADYTQR…KALIRSPPST (376 aa)) are condensation 1. The adenylation 1 stretch occupies residues 413–803 (SQASRRPDAA…VGRRDNQIKL (391 aa)). The region spanning 946 to 1022 (PPANPPERAL…EAASEIKEPT (77 aa)) is the Carrier 1 domain. O-(pantetheine 4'-phosphoryl)serine is present on serine 983. A disordered region spans residues 1016-1045 (SEIKEPTDASAPSPSPISRDLPLQKSNHDR). The tract at residues 1063–1506 (VEAIYPCTAL…LSRADMSLLQ (444 aa)) is condensation 2. The adenylation 2 stretch occupies residues 1524-1933 (AREVAHQRPL…EGRKDTRVKL (410 aa)). The region spanning 2078–2154 (KEVTDDQAFM…YMVSKTSVSN (77 aa)) is the Carrier 2 domain. Serine 2115 carries the post-translational modification O-(pantetheine 4'-phosphoryl)serine. Residues 2193–2582 (ESVAPATDAQ…LWMGAYLDAA (390 aa)) form a condensation 3 region.

It belongs to the NRP synthetase family.

Its pathway is secondary metabolite biosynthesis. Functionally, nonribisomal peptide synthetase; part of the gene cluster that mediates the biosynthesis of valactamides. The first step of the pathway is performed by the highly reducing polyketide synthase valA that produces the polyketide part of the final products. An acetyl starter unit is incorporated by the ketosynthase domain of valA, and subsequently 6 malonyl-CoA-derived ketide units are incorporated and fully reduced to their respective alkane forms by the action of the ketoreductase, dehydratase, and enoylreductase domains (except for the penultimate unit, which is reduced only to the alkene). The final five ketide units are each proposed to be alpha-methylated by the methyltransferase domain before ketone reduction by the ketoreductase domain. The C1 domain of the nonribisomal peptide synthetase valB then catalyzes amide bond formation between the heptaketide chain and L-valine (L-Val) attached to the T1 domain. The C2 domain incorporating L-isoleucine (L-Ile) then carries out chain elongation, which is followed by macrolactonization by the Ct domain to release the final product. This chain is Nonribisomal peptide synthetase valB, found in Aspergillus terreus.